The sequence spans 247 residues: uncharacterized protein (247 aa).

The next 2 helical transmembrane spans lie at 11-31 and 39-59; these read LIAP…IYCV and FIAI…TGLL.

The protein resides in the cell membrane. This is an uncharacterized protein from Haemophilus influenzae (strain ATCC 51907 / DSM 11121 / KW20 / Rd).